A 120-amino-acid chain; its full sequence is Large ribosomal subunit protein eL18 (120 aa).

Belongs to the eukaryotic ribosomal protein eL18 family.

This is Large ribosomal subunit protein eL18 from Pyrococcus abyssi (strain GE5 / Orsay).